The chain runs to 243 residues: tRNA1(Val) (adenine(37)-N6)-methyltransferase (243 aa).

This sequence belongs to the methyltransferase superfamily. tRNA (adenine-N(6)-)-methyltransferase family.

The protein localises to the cytoplasm. It catalyses the reaction adenosine(37) in tRNA1(Val) + S-adenosyl-L-methionine = N(6)-methyladenosine(37) in tRNA1(Val) + S-adenosyl-L-homocysteine + H(+). In terms of biological role, specifically methylates the adenine in position 37 of tRNA(1)(Val) (anticodon cmo5UAC). The polypeptide is tRNA1(Val) (adenine(37)-N6)-methyltransferase (Shewanella woodyi (strain ATCC 51908 / MS32)).